The chain runs to 231 residues: ATP-dependent dethiobiotin synthetase BioD (231 aa).

12–17 (EVGKTV) provides a ligand contact to ATP. Thr16 contributes to the Mg(2+) binding site. Lys37 is a catalytic residue. Ser41 lines the substrate pocket. ATP contacts are provided by residues Asp51, 112–115 (EGAG), and 202–204 (PKL). Mg(2+)-binding residues include Asp51 and Glu112.

Belongs to the dethiobiotin synthetase family. In terms of assembly, homodimer. It depends on Mg(2+) as a cofactor.

The protein resides in the cytoplasm. It carries out the reaction (7R,8S)-7,8-diammoniononanoate + CO2 + ATP = (4R,5S)-dethiobiotin + ADP + phosphate + 3 H(+). The protein operates within cofactor biosynthesis; biotin biosynthesis; biotin from 7,8-diaminononanoate: step 1/2. Its function is as follows. Catalyzes a mechanistically unusual reaction, the ATP-dependent insertion of CO2 between the N7 and N8 nitrogen atoms of 7,8-diaminopelargonic acid (DAPA, also called 7,8-diammoniononanoate) to form a ureido ring. The chain is ATP-dependent dethiobiotin synthetase BioD from Bacillus subtilis subsp. natto.